Consider the following 358-residue polypeptide: 3'(2'),5'-bisphosphate nucleotidase 2 (358 aa).

Catalysis depends on aspartate 54, which acts as the Proton acceptor. Glutamate 77, aspartate 141, isoleucine 143, and aspartate 144 together coordinate Mg(2+). The active-site Proton acceptor is threonine 146. Adenosine 3',5'-bisphosphate contacts are provided by threonine 146, histidine 243, serine 272, lysine 275, arginine 289, and aspartate 302. AMP is bound by residues histidine 243, serine 272, lysine 275, arginine 289, and aspartate 302. A Mg(2+)-binding site is contributed by aspartate 302.

Belongs to the inositol monophosphatase superfamily. Mg(2+) is required as a cofactor.

It catalyses the reaction 3'-phosphoadenylyl sulfate + H2O = adenosine 5'-phosphosulfate + phosphate. The catalysed reaction is adenosine 3',5'-bisphosphate + H2O = AMP + phosphate. The enzyme catalyses adenosine 2',5'-bisphosphate + H2O = AMP + phosphate. Functionally, phosphatase that converts adenosine 3'-phosphate 5'-phosphosulfate (PAPS) to adenosine 5'-phosphosulfate (APS) and 3'(2')-phosphoadenosine 5'-phosphate (PAP) to AMP. Regulates the flux of sulfur in the sulfur-activation pathway by converting PAPS to APS. Involved in salt tolerance. The sequence is that of 3'(2'),5'-bisphosphate nucleotidase 2 (HAL22) from Candida albicans (strain SC5314 / ATCC MYA-2876) (Yeast).